The following is a 300-amino-acid chain: MKKLIVFAFIGLLSQLIDGSLGMAYGVTSTSLLLAFGITPAVASASVHLAEVVTTAASGVSHIKFGNVDKQTVYQLVIPGSIGAFLGAAFLSQLPGDVAKPYISLFLLLLGGYVLIRFLFQYKPALEKKHVPLNRKQSIPLGVIAGFADATGGGGWGPVTTPILLSRKGLSPRKVVGTVDTSEFAIAVSATAGFLISLGWEDVNWLWVFSLMAGGIIAAPIAAWLVQKFHPQLMGVLVGGFIILVNARTLINEWIANTAVHPLIYTAIGAIWLSAVLFVLSKIGNRNIVKTAVDVHLKEK.

Helical transmembrane passes span 4–24 (LIVF…LGMA), 33–53 (LLAF…AEVV), 76–96 (LVIP…QLPG), 102–122 (YISL…LFQY), 139–159 (IPLG…WGPV), 206–226 (LWVF…AWLV), 231–251 (PQLM…RTLI), and 260–280 (VHPL…LFVL).

The protein belongs to the 4-toluene sulfonate uptake permease (TSUP) (TC 2.A.102) family.

The protein localises to the cell membrane. The chain is Probable membrane transporter protein YtnM (ytnM) from Bacillus subtilis (strain 168).